A 64-amino-acid polypeptide reads, in one-letter code: Temporin-ALe (64 aa).

Positions 1–22 (MFTLKKSLLLLFFLGTINLSLC) are cleaved as a signal peptide. Positions 23–47 (EQERNAEEERRDEPDERNAEVEKRF) are excised as a propeptide. At Leu-62 the chain carries Leucine amide.

Expressed by the skin glands.

The protein localises to the secreted. In terms of biological role, antimicrobial peptide with activity against Gram-positive and Gram-negative bacteria and against fungi. Has been tested against S.aureus (MIC=1.25 ug/mL), B.pumilus (MIC=5.0 ug/mL), B.cereus (MIC=15.0 ug/mL), E.coli (MIC=1.25 ug/mL), B.dysenteriae (MIC=5.0 ug/mL), A.cacoaceticus (MIC=15.0 ug/mL), P.aeruginosa (MIC=5.0 ug/mL) and C.albicans (MIC=1.25 ug/mL). Also shows a weak hemolytic activity. The polypeptide is Temporin-ALe (Amolops loloensis (Lolokou Sucker Frog)).